We begin with the raw amino-acid sequence, 502 residues long: Cysteine--tRNA ligase (502 aa).

Cys30 contacts Zn(2+). A 'HIGH' region motif is present at residues 32–42 (PTIYDYAHIGN). Zn(2+) contacts are provided by Cys224, His263, and Glu267. Residues 296–300 (KMSKS) carry the 'KMSKS' region motif. Lys299 lines the ATP pocket.

Belongs to the class-I aminoacyl-tRNA synthetase family. Monomer. The cofactor is Zn(2+).

It localises to the cytoplasm. It catalyses the reaction tRNA(Cys) + L-cysteine + ATP = L-cysteinyl-tRNA(Cys) + AMP + diphosphate. The sequence is that of Cysteine--tRNA ligase from Bartonella quintana (strain Toulouse) (Rochalimaea quintana).